The primary structure comprises 366 residues: DNA replication and repair protein RecF (366 aa).

Residue 30–37 (GRNAQGKT) participates in ATP binding.

It belongs to the RecF family.

Its subcellular location is the cytoplasm. Functionally, the RecF protein is involved in DNA metabolism; it is required for DNA replication and normal SOS inducibility. RecF binds preferentially to single-stranded, linear DNA. It also seems to bind ATP. This is DNA replication and repair protein RecF from Streptococcus thermophilus (strain CNRZ 1066).